A 284-amino-acid polypeptide reads, in one-letter code: D-tagatose-1,6-bisphosphate aldolase subunit GatY (284 aa).

The active-site Proton donor is the D82. 2 residues coordinate Zn(2+): H83 and H180. G181 provides a ligand contact to dihydroxyacetone phosphate. H208 is a binding site for Zn(2+). Residues 209–211 (GAS) and 230–233 (NVAT) contribute to the dihydroxyacetone phosphate site.

This sequence belongs to the class II fructose-bisphosphate aldolase family. TagBP aldolase GatY subfamily. In terms of assembly, forms a complex with GatZ. Requires Zn(2+) as cofactor.

It catalyses the reaction D-tagatofuranose 1,6-bisphosphate = D-glyceraldehyde 3-phosphate + dihydroxyacetone phosphate. It participates in carbohydrate metabolism; D-tagatose 6-phosphate degradation; D-glyceraldehyde 3-phosphate and glycerone phosphate from D-tagatose 6-phosphate: step 2/2. Catalytic subunit of the tagatose-1,6-bisphosphate aldolase GatYZ, which catalyzes the reversible aldol condensation of dihydroxyacetone phosphate (DHAP or glycerone-phosphate) with glyceraldehyde 3-phosphate (G3P) to produce tagatose 1,6-bisphosphate (TBP). Requires GatZ subunit for full activity and stability. Is involved in the catabolism of galactitol. The polypeptide is D-tagatose-1,6-bisphosphate aldolase subunit GatY (Shigella flexneri).